A 614-amino-acid polypeptide reads, in one-letter code: uncharacterized protein (614 aa).

A run of 2 helical transmembrane segments spans residues Val-494–Leu-516 and Leu-552–Ala-574. The disordered stretch occupies residues Ala-588–Ser-614. Basic and acidic residues predominate over residues Pro-591–Glu-605.

It is found in the cell membrane. This is an uncharacterized protein from Treponema pallidum (strain Nichols).